A 391-amino-acid chain; its full sequence is Multidrug resistance protein MdtL (391 aa).

The next 12 membrane-spanning stretches (helical) occupy residues 4 to 24 (FLIC…MYLV), 42 to 62 (IAFS…GKVA), 69 to 89 (PVAI…SLAE), 93 to 113 (LFLA…VVAF), 131 to 151 (LLNG…HLIM), 158 to 178 (SLFW…LFIL), 203 to 222 (FFLS…LTFV), 245 to 265 (ALTA…LGIF), 269 to 289 (TLMI…AVSP), 293 to 313 (VSLF…GVAM), 331 to 351 (LGIA…VVGI), and 356 to 376 (MLIG…MFVA).

This sequence belongs to the major facilitator superfamily. DHA1 family. MdtL (TC 2.A.1.2.22) subfamily.

It localises to the cell inner membrane. Its function is as follows. Confers resistance to chloramphenicol. In Escherichia coli O17:K52:H18 (strain UMN026 / ExPEC), this protein is Multidrug resistance protein MdtL.